A 429-amino-acid polypeptide reads, in one-letter code: Phosphomethylpyrimidine synthase (429 aa).

Residues asparagine 66, methionine 94, tyrosine 123, histidine 162, 184–186 (SRG), 225–228 (DALR), and glutamate 264 contribute to the substrate site. Histidine 268 provides a ligand contact to Zn(2+). Tyrosine 291 contacts substrate. Residue histidine 332 participates in Zn(2+) binding. [4Fe-4S] cluster-binding residues include cysteine 408, cysteine 411, and cysteine 415.

This sequence belongs to the ThiC family. The cofactor is [4Fe-4S] cluster.

The catalysed reaction is 5-amino-1-(5-phospho-beta-D-ribosyl)imidazole + S-adenosyl-L-methionine = 4-amino-2-methyl-5-(phosphooxymethyl)pyrimidine + CO + 5'-deoxyadenosine + formate + L-methionine + 3 H(+). It functions in the pathway cofactor biosynthesis; thiamine diphosphate biosynthesis. In terms of biological role, catalyzes the synthesis of the hydroxymethylpyrimidine phosphate (HMP-P) moiety of thiamine from aminoimidazole ribotide (AIR) in a radical S-adenosyl-L-methionine (SAM)-dependent reaction. This chain is Phosphomethylpyrimidine synthase, found in Sulfurisphaera tokodaii (strain DSM 16993 / JCM 10545 / NBRC 100140 / 7) (Sulfolobus tokodaii).